We begin with the raw amino-acid sequence, 549 residues long: Dicarboxylate transporter 2.2, chloroplastic (549 aa).

The N-terminal 54 residues, 1-54 (MESLALRSISLSASYLSLHRSSSKSFALLPPSISVHTSPTLRSLSISSPRFTLR), are a transit peptide targeting the chloroplast. The disordered stretch occupies residues 57-79 (ASSLPEEQNKPQPPPPSPPQPQG). The span at 67-77 (PQPPPPSPPQP) shows a compositional bias: pro residues. 12 helical membrane-spanning segments follow: residues 79 to 99 (GAKL…RFLI), 115 to 135 (IFLF…AWAF), 151 to 171 (TAFA…FFFA), 220 to 240 (AGGV…SYPG), 247 to 267 (LGSF…AILL), 294 to 314 (WFKV…LIIY), 344 to 364 (NEWI…FGEA), 365 to 385 (IGIA…LLGV), 403 to 423 (WFAV…VAWM), 436 to 456 (LTWP…HYLF), 470 to 490 (FLAM…CLAF), and 523 to 543 (VGFV…SFWW).

The protein belongs to the SLC13A/DASS transporter (TC 2.A.47) family. DIT1 subfamily. In terms of tissue distribution, expressed in roots, rosette and cauline leaves, stems, flowers and siliques.

The protein resides in the plastid. The protein localises to the chloroplast inner membrane. May be involved in the transport of dicarboxylate compounds. This is Dicarboxylate transporter 2.2, chloroplastic (DIT2-2) from Arabidopsis thaliana (Mouse-ear cress).